Here is a 448-residue protein sequence, read N- to C-terminus: Phosphoglucosamine mutase (448 aa).

S104 serves as the catalytic Phosphoserine intermediate. Residues S104, D243, D245, and D247 each contribute to the Mg(2+) site. Phosphoserine is present on S104.

Belongs to the phosphohexose mutase family. It depends on Mg(2+) as a cofactor. Activated by phosphorylation.

The catalysed reaction is alpha-D-glucosamine 1-phosphate = D-glucosamine 6-phosphate. In terms of biological role, catalyzes the conversion of glucosamine-6-phosphate to glucosamine-1-phosphate. The protein is Phosphoglucosamine mutase of Xylella fastidiosa (strain 9a5c).